A 278-amino-acid polypeptide reads, in one-letter code: Large ribosomal subunit protein uL2 (278 aa).

The tract at residues 226–278 is disordered; it reads NPIDHPHGGGEGRTSGGRHPVTPWGKPTKGKKTRSNKSTDKFILISRHKRKKK.

The protein belongs to the universal ribosomal protein uL2 family. In terms of assembly, part of the 50S ribosomal subunit. Forms a bridge to the 30S subunit in the 70S ribosome.

Its function is as follows. One of the primary rRNA binding proteins. Required for association of the 30S and 50S subunits to form the 70S ribosome, for tRNA binding and peptide bond formation. It has been suggested to have peptidyltransferase activity; this is somewhat controversial. Makes several contacts with the 16S rRNA in the 70S ribosome. The sequence is that of Large ribosomal subunit protein uL2 from Rhodopseudomonas palustris (strain HaA2).